Consider the following 250-residue polypeptide: Methionine aminopeptidase (250 aa).

Substrate is bound at residue histidine 77. Positions 94, 105, and 169 each coordinate a divalent metal cation. Substrate is bound at residue histidine 176. Glutamate 202 and glutamate 235 together coordinate a divalent metal cation.

It belongs to the peptidase M24A family. Methionine aminopeptidase type 1 subfamily. In terms of assembly, monomer. Co(2+) is required as a cofactor. It depends on Zn(2+) as a cofactor. Requires Mn(2+) as cofactor. Fe(2+) serves as cofactor.

It catalyses the reaction Release of N-terminal amino acids, preferentially methionine, from peptides and arylamides.. In terms of biological role, removes the N-terminal methionine from nascent proteins. The N-terminal methionine is often cleaved when the second residue in the primary sequence is small and uncharged (Met-Ala-, Cys, Gly, Pro, Ser, Thr, or Val). Requires deformylation of the N(alpha)-formylated initiator methionine before it can be hydrolyzed. The sequence is that of Methionine aminopeptidase from Mycoplasmoides gallisepticum (strain R(low / passage 15 / clone 2)) (Mycoplasma gallisepticum).